Here is an 81-residue protein sequence, read N- to C-terminus: ATP synthase subunit c (81 aa).

The next 2 helical transmembrane spans lie at 7-27 and 57-77; these read AASV…PGIG and LAFM…LLFA.

This sequence belongs to the ATPase C chain family. F-type ATPases have 2 components, F(1) - the catalytic core - and F(0) - the membrane proton channel. F(1) has five subunits: alpha(3), beta(3), gamma(1), delta(1), epsilon(1). F(0) has four main subunits: a(1), b(1), b'(1) and c(10-14). The alpha and beta chains form an alternating ring which encloses part of the gamma chain. F(1) is attached to F(0) by a central stalk formed by the gamma and epsilon chains, while a peripheral stalk is formed by the delta, b and b' chains.

The protein resides in the cellular thylakoid membrane. F(1)F(0) ATP synthase produces ATP from ADP in the presence of a proton or sodium gradient. F-type ATPases consist of two structural domains, F(1) containing the extramembraneous catalytic core and F(0) containing the membrane proton channel, linked together by a central stalk and a peripheral stalk. During catalysis, ATP synthesis in the catalytic domain of F(1) is coupled via a rotary mechanism of the central stalk subunits to proton translocation. In terms of biological role, key component of the F(0) channel; it plays a direct role in translocation across the membrane. A homomeric c-ring of between 10-14 subunits forms the central stalk rotor element with the F(1) delta and epsilon subunits. This is ATP synthase subunit c from Nostoc sp. (strain PCC 7120 / SAG 25.82 / UTEX 2576).